Here is a 542-residue protein sequence, read N- to C-terminus: Glucans biosynthesis protein G (542 aa).

Positions 1–34 (MVSLLRCPSSKPYSSLICSLTLGAVVALSGVAYA) are cleaved as a signal peptide.

This sequence belongs to the OpgD/OpgG family.

The protein localises to the periplasm. It participates in glycan metabolism; osmoregulated periplasmic glucan (OPG) biosynthesis. Involved in the biosynthesis of osmoregulated periplasmic glucans (OPGs). The protein is Glucans biosynthesis protein G of Shewanella baltica (strain OS223).